The following is a 658-amino-acid chain: Heat shock 70 kDa protein, mitochondrial (658 aa).

The tract at residues 629–658 (KLDSSASKSSSTENKENKDNTTEAEFTEKK) is disordered. Over residues 631–640 (DSSASKSSST) the composition is skewed to low complexity. A compositionally biased stretch (basic and acidic residues) spans 641–658 (ENKENKDNTTEAEFTEKK).

The protein belongs to the heat shock protein 70 family.

Its subcellular location is the mitochondrion. In terms of biological role, may function in protein folding and assembly, and disassembly of protein complexes. The chain is Heat shock 70 kDa protein, mitochondrial (mhsp70) from Dictyostelium discoideum (Social amoeba).